A 223-amino-acid chain; its full sequence is PKHD-type hydroxylase CPS_3426 (223 aa).

Positions 77-175 (KSMMPFIISE…RKVALTWIES (99 aa)) constitute a Fe2OG dioxygenase domain. Residues His-96, Asp-98, and His-156 each contribute to the Fe cation site. Arg-166 serves as a coordination point for 2-oxoglutarate.

Fe(2+) serves as cofactor. It depends on L-ascorbate as a cofactor.

The chain is PKHD-type hydroxylase CPS_3426 from Colwellia psychrerythraea (strain 34H / ATCC BAA-681) (Vibrio psychroerythus).